Consider the following 616-residue polypeptide: Chaperone protein DnaK (616 aa).

Thr175 carries the post-translational modification Phosphothreonine; by autocatalysis. Residues 579 to 605 (GGDPSQAGGFDPNAAGGAQQAPHDDNV) form a disordered region.

The protein belongs to the heat shock protein 70 family.

Functionally, acts as a chaperone. This is Chaperone protein DnaK from Clostridium botulinum (strain Alaska E43 / Type E3).